Reading from the N-terminus, the 79-residue chain is ATP synthase subunit c (79 aa).

Transmembrane regions (helical) follow at residues 7–27 and 56–76; these read VSGM…GAGI and IGSA…LFLI.

Belongs to the ATPase C chain family. In terms of assembly, F-type ATPases have 2 components, F(1) - the catalytic core - and F(0) - the membrane proton channel. F(1) has five subunits: alpha(3), beta(3), gamma(1), delta(1), epsilon(1). F(0) has three main subunits: a(1), b(2) and c(10-14). The alpha and beta chains form an alternating ring which encloses part of the gamma chain. F(1) is attached to F(0) by a central stalk formed by the gamma and epsilon chains, while a peripheral stalk is formed by the delta and b chains.

It is found in the cell membrane. Its function is as follows. F(1)F(0) ATP synthase produces ATP from ADP in the presence of a proton or sodium gradient. F-type ATPases consist of two structural domains, F(1) containing the extramembraneous catalytic core and F(0) containing the membrane proton channel, linked together by a central stalk and a peripheral stalk. During catalysis, ATP synthesis in the catalytic domain of F(1) is coupled via a rotary mechanism of the central stalk subunits to proton translocation. In terms of biological role, key component of the F(0) channel; it plays a direct role in translocation across the membrane. A homomeric c-ring of between 10-14 subunits forms the central stalk rotor element with the F(1) delta and epsilon subunits. This is ATP synthase subunit c from Clostridium botulinum (strain Hall / ATCC 3502 / NCTC 13319 / Type A).